The chain runs to 223 residues: Cytidylate kinase (223 aa).

12 to 20 (GPSGVGKGT) contacts ATP.

The protein belongs to the cytidylate kinase family. Type 1 subfamily.

The protein localises to the cytoplasm. The enzyme catalyses CMP + ATP = CDP + ADP. It carries out the reaction dCMP + ATP = dCDP + ADP. The chain is Cytidylate kinase from Xylella fastidiosa (strain 9a5c).